The sequence spans 348 residues: D-erythrose-4-phosphate dehydrogenase (348 aa).

Residues 12–13 (RI) and Arg81 contribute to the NAD(+) site. Residues 154–156 (SCT), Arg200, 213–214 (TK), and Arg236 contribute to the substrate site. Cys155 acts as the Nucleophile in catalysis. Residue Asn318 participates in NAD(+) binding.

Belongs to the glyceraldehyde-3-phosphate dehydrogenase family. Epd subfamily. Homotetramer.

It localises to the cytoplasm. The catalysed reaction is D-erythrose 4-phosphate + NAD(+) + H2O = 4-phospho-D-erythronate + NADH + 2 H(+). It participates in cofactor biosynthesis; pyridoxine 5'-phosphate biosynthesis; pyridoxine 5'-phosphate from D-erythrose 4-phosphate: step 1/5. In terms of biological role, catalyzes the NAD-dependent conversion of D-erythrose 4-phosphate to 4-phosphoerythronate. This chain is D-erythrose-4-phosphate dehydrogenase, found in Salmonella paratyphi A (strain ATCC 9150 / SARB42).